A 229-amino-acid polypeptide reads, in one-letter code: Urease accessory protein UreF (229 aa).

It belongs to the UreF family. As to quaternary structure, ureD, UreF and UreG form a complex that acts as a GTP-hydrolysis-dependent molecular chaperone, activating the urease apoprotein by helping to assemble the nickel containing metallocenter of UreC. The UreE protein probably delivers the nickel.

It localises to the cytoplasm. Required for maturation of urease via the functional incorporation of the urease nickel metallocenter. The polypeptide is Urease accessory protein UreF (Staphylococcus saprophyticus subsp. saprophyticus (strain ATCC 15305 / DSM 20229 / NCIMB 8711 / NCTC 7292 / S-41)).